The following is a 151-amino-acid chain: Small ribosomal subunit protein uS15 (151 aa).

This sequence belongs to the universal ribosomal protein uS15 family. In terms of assembly, component of the small ribosomal subunit. Mature ribosomes consist of a small (40S) and a large (60S) subunit. The 40S subunit contains about 32 different proteins and 1 molecule of RNA (18S). The 60S subunit contains 45 different proteins and 3 molecules of RNA (25S, 5.8S and 5S).

It is found in the cytoplasm. In terms of biological role, component of the ribosome, a large ribonucleoprotein complex responsible for the synthesis of proteins in the cell. The small ribosomal subunit (SSU) binds messenger RNAs (mRNAs) and translates the encoded message by selecting cognate aminoacyl-transfer RNA (tRNA) molecules. The large subunit (LSU) contains the ribosomal catalytic site termed the peptidyl transferase center (PTC), which catalyzes the formation of peptide bonds, thereby polymerizing the amino acids delivered by tRNAs into a polypeptide chain. The nascent polypeptides leave the ribosome through a tunnel in the LSU and interact with protein factors that function in enzymatic processing, targeting, and the membrane insertion of nascent chains at the exit of the ribosomal tunnel. This chain is Small ribosomal subunit protein uS15 (RPS13), found in Candida albicans (strain SC5314 / ATCC MYA-2876) (Yeast).